The chain runs to 259 residues: Ribosomal RNA small subunit methyltransferase J (259 aa).

S-adenosyl-L-methionine contacts are provided by residues 109-110 (RD), 125-126 (ER), 161-162 (SS), and Asp179.

The protein belongs to the methyltransferase superfamily. RsmJ family.

Its subcellular location is the cytoplasm. It carries out the reaction guanosine(1516) in 16S rRNA + S-adenosyl-L-methionine = N(2)-methylguanosine(1516) in 16S rRNA + S-adenosyl-L-homocysteine + H(+). In terms of biological role, specifically methylates the guanosine in position 1516 of 16S rRNA. This chain is Ribosomal RNA small subunit methyltransferase J, found in Shewanella putrefaciens (strain CN-32 / ATCC BAA-453).